Consider the following 447-residue polypeptide: N-succinylarginine dihydrolase (447 aa).

Substrate contacts are provided by residues 19–28, asparagine 110, and 137–138; these read AGLSFGNEAS and HR. The active site involves glutamate 174. Arginine 212 contributes to the substrate binding site. Histidine 248 is a catalytic residue. 2 residues coordinate substrate: aspartate 250 and asparagine 359. Cysteine 365 acts as the Nucleophile in catalysis.

The protein belongs to the succinylarginine dihydrolase family. As to quaternary structure, homodimer.

It catalyses the reaction N(2)-succinyl-L-arginine + 2 H2O + 2 H(+) = N(2)-succinyl-L-ornithine + 2 NH4(+) + CO2. It participates in amino-acid degradation; L-arginine degradation via AST pathway; L-glutamate and succinate from L-arginine: step 2/5. Its function is as follows. Catalyzes the hydrolysis of N(2)-succinylarginine into N(2)-succinylornithine, ammonia and CO(2). The polypeptide is N-succinylarginine dihydrolase (Salmonella dublin (strain CT_02021853)).